A 521-amino-acid chain; its full sequence is MAKITRALISLSDKTGIVEFARELAGYGVEILSTGGTAKLLRDAGLTVKDVSEHTGFPEMLDGRVKTLHPKVHGGLLGMRSNPEHVATMKEHGILPIDMVVVNLYPFEATVANPACTLEDAIENIDIGGPTMLRSAAKNNADVTVVVDPADYRTVLDEMKASGGSVAKETNFRLAVKVYQHTAAYDGAISNWLGARTGEGVATYSDTITLQFKKAQEMRYGENPHQSAAFYVERQVQEASVSTARQLQGKELSYNNIGDTDAALECVKQFSEGPACVIVKHANPCGVAIGKNLLEAYDRAYATDPESAFGGIIAFNGELDAETAKAICDRQFVEVIIAPSVSKAAVEVVAAKKNVRLLECGIWPAQPAQRLDFKRVNGGLLVQDTDLALSAELKVVSKRQPTAQEMIDLQFAWRVAKFVKSNAIVYGKDGMTIGVGAGQMSRVNSARIAAIKAEHAGLEVQGAVMASDAFFPFRDGIDNAAAVGITAVIQPGGSMRDAEVIAAADEHGMAMVFTGMRHFRH.

One can recognise an MGS-like domain in the interval 1-147; the sequence is MAKITRALIS…KNNADVTVVV (147 aa).

This sequence belongs to the PurH family.

The enzyme catalyses (6R)-10-formyltetrahydrofolate + 5-amino-1-(5-phospho-beta-D-ribosyl)imidazole-4-carboxamide = 5-formamido-1-(5-phospho-D-ribosyl)imidazole-4-carboxamide + (6S)-5,6,7,8-tetrahydrofolate. It carries out the reaction IMP + H2O = 5-formamido-1-(5-phospho-D-ribosyl)imidazole-4-carboxamide. It participates in purine metabolism; IMP biosynthesis via de novo pathway; 5-formamido-1-(5-phospho-D-ribosyl)imidazole-4-carboxamide from 5-amino-1-(5-phospho-D-ribosyl)imidazole-4-carboxamide (10-formyl THF route): step 1/1. Its pathway is purine metabolism; IMP biosynthesis via de novo pathway; IMP from 5-formamido-1-(5-phospho-D-ribosyl)imidazole-4-carboxamide: step 1/1. This is Bifunctional purine biosynthesis protein PurH from Geobacter metallireducens (strain ATCC 53774 / DSM 7210 / GS-15).